The primary structure comprises 88 residues: Period circadian protein (88 aa).

The disordered stretch occupies residues 23–88 (VTNTSIAGTG…VTLTESLLNK (66 aa)). 16 consecutive repeat copies span residues 30 to 31 (GT), 33 to 34 (GT), 35 to 36 (GT), 37 to 38 (GT), 39 to 40 (GT), 41 to 42 (GT), 43 to 44 (GT), 45 to 46 (GT), 47 to 48 (GT), 49 to 50 (GT), 51 to 52 (GT), 53 to 54 (GT), 55 to 56 (GT), 57 to 58 (GT), 59 to 60 (GT), and 61 to 62 (GN). Positions 30–62 (GTGGTGTGTGTGTGTGTGTGTGTGTGTGTGTGN) are 16 X 2 AA tandem repeats of G-[TN]. A compositionally biased stretch (gly residues) spans 30–62 (GTGGTGTGTGTGTGTGTGTGTGTGTGTGTGTGN). Residues 79-88 (VTLTESLLNK) show a composition bias toward polar residues.

In terms of assembly, forms a heterodimer with timeless (TIM); the complex then translocates into the nucleus. Phosphorylated with a circadian rhythmicity, probably by the double-time protein (dbt). Phosphorylation could be implicated in the stability of per monomer and in the formation of heterodimer per-tim.

The protein localises to the nucleus. Its subcellular location is the cytoplasm. It localises to the perinuclear region. Its function is as follows. Essential for biological clock functions. Determines the period length of circadian and ultradian rhythms; an increase in PER dosage leads to shortened circadian rhythms and a decrease leads to lengthened circadian rhythms. Essential for the circadian rhythmicity of locomotor activity, eclosion behavior, and for the rhythmic component of the male courtship song that originates in the thoracic nervous system. The biological cycle depends on the rhythmic formation and nuclear localization of the TIM-PER complex. Light induces the degradation of TIM, which promotes elimination of PER. Nuclear activity of the heterodimer coordinatively regulates PER and TIM transcription through a negative feedback loop. Behaves as a negative element in circadian transcriptional loop. Does not appear to bind DNA, suggesting indirect transcriptional inhibition. This chain is Period circadian protein (per), found in Drosophila teissieri (Fruit fly).